Reading from the N-terminus, the 211-residue chain is Uracil phosphoribosyltransferase (211 aa).

Residues arginine 79, arginine 104, and 131-139 (DPMLATGGS) contribute to the 5-phospho-alpha-D-ribose 1-diphosphate site. Uracil-binding positions include isoleucine 196 and 201 to 203 (GDA). A 5-phospho-alpha-D-ribose 1-diphosphate-binding site is contributed by aspartate 202.

This sequence belongs to the UPRTase family. Requires Mg(2+) as cofactor.

The enzyme catalyses UMP + diphosphate = 5-phospho-alpha-D-ribose 1-diphosphate + uracil. It participates in pyrimidine metabolism; UMP biosynthesis via salvage pathway; UMP from uracil: step 1/1. Allosterically activated by GTP. Its function is as follows. Catalyzes the conversion of uracil and 5-phospho-alpha-D-ribose 1-diphosphate (PRPP) to UMP and diphosphate. This chain is Uracil phosphoribosyltransferase, found in Lactococcus lactis subsp. cremoris (strain SK11).